Reading from the N-terminus, the 1221-residue chain is RNA exonuclease 1 homolog (1221 aa).

The segment covering 37–46 (RGSGAPGDGG) has biased composition (gly residues). Residues 37-75 (RGSGAPGDGGEAPPAAGLGYDPYNPELPKPPAQRENGTL) are disordered. A coiled-coil region spans residues 86 to 115 (LELELVNQAIEAVRSEVELEQRRYRELLET). Residues 116 to 598 (TREHRSAEAP…STSSAGADVD (483 aa)) form a disordered region. At Arg191 the chain carries Omega-N-methylarginine. Residues Ser287, Ser289, and Ser358 each carry the phosphoserine modification. A compositionally biased stretch (low complexity) spans 357-369 (ASPAQVQSSQDGG). The segment covering 393–417 (AQGKDKTKDKGRGRPVEKPRADKKG) has biased composition (basic and acidic residues). Residues Ser459, Ser499, and Ser526 each carry the phosphoserine modification. Residues 492–501 (LVERKARSLD) show a composition bias toward basic and acidic residues. The interval 498-577 (RSLDEGASQD…KRLKASPPPS (80 aa)) is interaction with ELOA. Over residues 580–593 (PSSSSSSSSSTSSA) the composition is skewed to low complexity. Position 610 is a phosphoserine (Ser610). Disordered stretches follow at residues 619–692 (IFNE…TAQE) and 735–775 (HIPN…TRTL). The span at 627 to 648 (KTEDRGRLARQPPKEEKSEEKG) shows a compositional bias: basic and acidic residues. The residue at position 914 (Ser914) is a Phosphoserine. The Exonuclease domain maps to 1060–1209 (IYALDCEMSY…EDAGACMHLV (150 aa)).

The protein belongs to the REXO1/REXO3 family. As to quaternary structure, interacts with TCEA2 and ELOA. As to expression, ubiquitously expressed.

It localises to the nucleus. Functionally, seems to have no detectable effect on transcription elongation in vitro. The sequence is that of RNA exonuclease 1 homolog (REXO1) from Homo sapiens (Human).